The primary structure comprises 165 residues: UPF0114 protein in repA1-repA2 intergenic region (165 aa).

Helical transmembrane passes span Tyr10–Leu32, Leu53–Phe75, and Ile136–Cys155.

This sequence belongs to the UPF0114 family.

It localises to the cell membrane. This is UPF0114 protein in repA1-repA2 intergenic region from Buchnera aphidicola subsp. Geoica urticularia.